The chain runs to 693 residues: Polyribonucleotide nucleotidyltransferase (693 aa).

Mg(2+) is bound by residues aspartate 487 and aspartate 493. One can recognise a KH domain in the interval 554 to 613; sequence PRIYTIKINPEKIKDVIGKGGSIIRMLTEETGTVIEIKDDGIVKISAINGEKAKYAIKRI. One can recognise an S1 motif domain in the interval 623-691; it reads GKIYSGKVTR…RQGRIRLSMK (69 aa).

It belongs to the polyribonucleotide nucleotidyltransferase family. Component of the RNA degradosome, which is a multiprotein complex involved in RNA processing and mRNA degradation. The cofactor is Mg(2+).

It is found in the cytoplasm. It catalyses the reaction RNA(n+1) + phosphate = RNA(n) + a ribonucleoside 5'-diphosphate. Functionally, involved in mRNA degradation. Catalyzes the phosphorolysis of single-stranded polyribonucleotides processively in the 3'- to 5'-direction. This Buchnera aphidicola subsp. Cinara cedri (strain Cc) protein is Polyribonucleotide nucleotidyltransferase.